A 391-amino-acid polypeptide reads, in one-letter code: Adhesion defective protein 1 (391 aa).

The span at 180 to 190 shows a compositional bias: polar residues; that stretch reads SQSRPPQNQIQ. 2 disordered regions span residues 180–217 and 366–391; these read SQSR…PDSP and VEGE…RTKV. Residues 201–211 show a composition bias toward low complexity; sequence SESVNINSSSS. The span at 370–383 shows a compositional bias: polar residues; the sequence is NPNNNPNFYSSDML.

This sequence belongs to the adn1/SEU family.

The protein resides in the nucleus. Functionally, probable transcriptional regulator involved in cell adhesion. This is Adhesion defective protein 1 (adn1) from Schizosaccharomyces pombe (strain 972 / ATCC 24843) (Fission yeast).